The following is a 1312-amino-acid chain: DNA repair protein RAD50 (1312 aa).

ATP-binding residues include Arg-13, Asn-38, Gly-39, Gly-41, Lys-42, Thr-43, Thr-44, Val-67, Asp-69, and Gln-159. Residue Thr-43 participates in Mg(2+) binding. Gln-159 is a Mg(2+) binding site. Coiled-coil stretches lie at residues 228 to 359 (TSKE…QADR), 401 to 598 (RERQ…AKLN), and 635 to 673 (SQDF…ITQL). At Ser-635 the chain carries Phosphoserine; by ATM. The 100-residue stretch at 635-734 (SQDFESDLDR…RRDEMLGLVP (100 aa)) folds into the Zinc-hook domain. Zn(2+) contacts are provided by Cys-681 and Cys-684. The residue at position 690 (Thr-690) is a Phosphothreonine. 2 coiled-coil regions span residues 706–734 (RLAP…GLVP) and 789–1079 (LTDV…GRQK). Lys-959 bears the N6-acetyllysine mark.

Belongs to the SMC family. RAD50 subfamily. Component of the MRN complex composed of two heterodimers RAD50 and MRE11 associated with a single NBN. The MRN complexes dimerize on DNA to form joined MRN-MRN oligomers required for DNA double-strand break repair. As part of the MRN complex, interacts with MCM8 and MCM9; the interaction recruits the complex to DNA repair sites. Component of the BASC complex, at least composed of BRCA1, MSH2, MSH6, MLH1, ATM, BLM, RAD50, MRE11 and NBN. Found in a complex with TERF2. Interacts with RINT1. Interacts with BRCA1 via its N-terminal domain. Interacts with DCLRE1C/Artemis. Interacts with MRNIP. Interacts with CYREN (via XLF motif). Interacts with C1QBP and MRE11; interaction takes place in absence of DNA damage to form the MRC (MRE11-RAD50-C1QBP) complex that inhibits the activity of MRE11. In terms of assembly, (Microbial infection) Interacts with herpes simplex virus 1 protein UL12. Zn(2+) is required as a cofactor. In terms of processing, phosphorylation at Ser-635 by ATM in response to DNA damage is required for double-strand break (DSB) repair. As to expression, expressed at very low level in most tissues, except in testis where it is expressed at higher level. Expressed in fibroblasts.

It localises to the nucleus. The protein localises to the chromosome. It is found in the telomere. It catalyses the reaction ATP + H2O = ADP + phosphate + H(+). In terms of biological role, component of the MRN complex, which plays a central role in double-strand break (DSB) repair, DNA recombination, maintenance of telomere integrity and meiosis. The MRN complex is involved in the repair of DNA double-strand breaks (DSBs) via homologous recombination (HR), an error-free mechanism which primarily occurs during S and G2 phases. The complex (1) mediates the end resection of damaged DNA, which generates proper single-stranded DNA, a key initial steps in HR, and is (2) required for the recruitment of other repair factors and efficient activation of ATM and ATR upon DNA damage. The MRN complex possesses single-strand endonuclease activity and double-strand-specific 3'-5' exonuclease activity, which are provided by MRE11, to initiate end resection, which is required for single-strand invasion and recombination. Within the complex, RAD50 is both required to bind DNA ends and hold them in close proximity and regulate the activity of MRE11. RAD50 provides an ATP-dependent control of MRE11 by positioning DNA ends into the MRE11 active site: ATP-binding induces a large structural change from an open form with accessible MRE11 nuclease sites into a closed form. The MRN complex is also required for DNA damage signaling via activation of the ATM and ATR kinases: the nuclease activity of MRE11 is not required to activate ATM and ATR. The MRN complex is also required for the processing of R-loops. In telomeres the MRN complex may modulate t-loop formation. The sequence is that of DNA repair protein RAD50 from Homo sapiens (Human).